The primary structure comprises 232 residues: 5'-methylthioadenosine/S-adenosylhomocysteine nucleosidase (232 aa).

The active-site Proton acceptor is the Glu-12. Substrate is bound by residues Gly-78, Ile-152, and 173–174 (ME). Catalysis depends on Asp-197, which acts as the Proton donor.

This sequence belongs to the PNP/UDP phosphorylase family. MtnN subfamily. As to quaternary structure, homodimer.

The enzyme catalyses S-adenosyl-L-homocysteine + H2O = S-(5-deoxy-D-ribos-5-yl)-L-homocysteine + adenine. It catalyses the reaction S-methyl-5'-thioadenosine + H2O = 5-(methylsulfanyl)-D-ribose + adenine. It carries out the reaction 5'-deoxyadenosine + H2O = 5-deoxy-D-ribose + adenine. It participates in amino-acid biosynthesis; L-methionine biosynthesis via salvage pathway; S-methyl-5-thio-alpha-D-ribose 1-phosphate from S-methyl-5'-thioadenosine (hydrolase route): step 1/2. Functionally, catalyzes the irreversible cleavage of the glycosidic bond in both 5'-methylthioadenosine (MTA) and S-adenosylhomocysteine (SAH/AdoHcy) to adenine and the corresponding thioribose, 5'-methylthioribose and S-ribosylhomocysteine, respectively. Also cleaves 5'-deoxyadenosine, a toxic by-product of radical S-adenosylmethionine (SAM) enzymes, into 5-deoxyribose and adenine. Thus, is required for in vivo function of the radical SAM enzymes biotin synthase and lipoic acid synthase, that are inhibited by 5'-deoxyadenosine accumulation. This is 5'-methylthioadenosine/S-adenosylhomocysteine nucleosidase from Enterobacter sp. (strain 638).